The following is an 883-amino-acid chain: Kinesin-like protein 5 (883 aa).

Residues Ser6–Ile390 enclose the Kinesin motor domain. ATP is bound at residue Gly144–Thr151. Coiled coils occupy residues Arg396–Ser435 and Leu563–Phe588. Residues Val755–Gln785 form a disordered region.

Belongs to the TRAFAC class myosin-kinesin ATPase superfamily. Kinesin family. Kinesin II subfamily. Heterodimer with klp6.

Its subcellular location is the cytoplasm. The protein resides in the cytoskeleton. It is found in the chromosome. The protein localises to the centromere. It localises to the kinetochore. Its subcellular location is the spindle. In terms of biological role, has a role in establishing metaphase during mitosis. Required for chromosome segregation where it generates tension during kinetochore capturing. The chain is Kinesin-like protein 5 (klp5) from Schizosaccharomyces pombe (strain 972 / ATCC 24843) (Fission yeast).